The sequence spans 106 residues: UPF0145 protein PputW619_2377 (106 aa).

It belongs to the UPF0145 family.

The protein is UPF0145 protein PputW619_2377 of Pseudomonas putida (strain W619).